We begin with the raw amino-acid sequence, 241 residues long: Probable transcriptional regulatory protein Mpe_A1337 (241 aa).

The disordered stretch occupies residues 1-20; it reads MAGHSKWANIQHRKGRQDEK.

The protein belongs to the TACO1 family.

It localises to the cytoplasm. In Methylibium petroleiphilum (strain ATCC BAA-1232 / LMG 22953 / PM1), this protein is Probable transcriptional regulatory protein Mpe_A1337.